Consider the following 358-residue polypeptide: MNTLFMHCRPGFEGEVCSEIAEHAARLNVSGYAKAKTGSACAEFVCTEEDGAQRLMHGQRFAELIFPRQWARGVFIDLPETDRISVILAHLREFPVCGSLWLEMVDTNDGKELSNFCKKFEVHLRKALLNAGKLVDDPSKPRLLLTFKSGREVFMGLAESNNSAMWPMGIPRLKFPRDAPSRSTLKLEEAWHHFIPRDQWDERLHGDMTGVDLGAAPGGWTWQLVNRGMLVTAIDNGPMAESLMDTGLVQHLMADGFTFVPKQPVDWMVCDIVEKPARNAALLETWIGEGHCREAVVNLKLPMKQRYAEVKRLLERIEEGFKARGIRVEIGCKQLYHDREEVTCHLRRLETAKKTKAR.

S-adenosyl-L-methionine-binding positions include serine 183, 216–219, aspartate 235, aspartate 255, and aspartate 271; that span reads APGG. The active-site Proton acceptor is lysine 300.

This sequence belongs to the class I-like SAM-binding methyltransferase superfamily. RNA methyltransferase RlmE family. RlmM subfamily. Monomer.

The protein localises to the cytoplasm. The enzyme catalyses cytidine(2498) in 23S rRNA + S-adenosyl-L-methionine = 2'-O-methylcytidine(2498) in 23S rRNA + S-adenosyl-L-homocysteine + H(+). Its function is as follows. Catalyzes the 2'-O-methylation at nucleotide C2498 in 23S rRNA. In Pseudomonas fluorescens (strain SBW25), this protein is Ribosomal RNA large subunit methyltransferase M.